A 301-amino-acid chain; its full sequence is Thyroxine 5-deiodinase (301 aa).

Topologically, residues methionine 1–serine 41 are cytoplasmic. Residues cysteine 42 to isoleucine 64 form a helical; Signal-anchor for type II membrane protein membrane-spanning segment. Over arginine 65–valine 301 the chain is Extracellular. The active site involves selenocysteine 167. Position 167 (selenocysteine 167) is a non-standard amino acid, selenocysteine.

The protein belongs to the iodothyronine deiodinase family. Monomer. Homodimer. May undergo minor heretodimerization with DIO1 and DIO2. In terms of tissue distribution, highly expressed in mammary gland. Detected at lower levels in kidney, and at very low levels in the other tissues.

Its subcellular location is the cell membrane. The protein resides in the endosome membrane. The enzyme catalyses 3,3',5'-triiodo-L-thyronine + iodide + A + H(+) = L-thyroxine + AH2. The catalysed reaction is 3,3'-diiodo-L-thyronine + iodide + A + H(+) = 3,3',5-triiodo-L-thyronine + AH2. It catalyses the reaction 3-iodo-L-thyronine + iodide + A + H(+) = 3,5-diiodo-L-thyronine + AH2. It carries out the reaction L-thyronine + iodide + A + H(+) = 3-iodo-L-thyronine + AH2. The enzyme catalyses 3',5'-diiodo-L-thyronine + iodide + A + H(+) = 3,3',5'-triiodo-L-thyronine + AH2. The catalysed reaction is 3'-iodo-L-thyronine + iodide + A + H(+) = 3,3'-diiodo-L-thyronine + AH2. It catalyses the reaction 3,3',5'-triiodothyronamine + iodide + A + H(+) = 3,3',5,5'-tetraiodothyronamine + AH2. It carries out the reaction 3',5'-diiodothyronamine + iodide + A + H(+) = 3,3',5'-triiodothyronamine + AH2. The enzyme catalyses 3,3'-diiodothyronamine + iodide + A + H(+) = 3,3',5-triiodothyronamine + AH2. The catalysed reaction is 3-iodothyronamine + iodide + A + H(+) = 3,5-diiodothyronamine + AH2. It catalyses the reaction 3'-iodothyronamine + iodide + A + H(+) = 3,3'-diiodothyronamine + AH2. It carries out the reaction thyronamine + iodide + A + H(+) = 3-iodothyronamine + AH2. Functionally, plays a crucial role in the metabolism of thyroid hormones (TH) and has specific roles in TH activation and inactivation by deiodination. Catalyzes the deiodination of L-thyroxine (T4) to 3,3',5'-triiodothyronine (rT3), 3,5,3'-triiodothyronine (T3) to 3,3'-diiodothyronine (3,3'-T2), 3,5-diiodothyronine (3,5-T2) to 3-monoiodothyronine (3-T1), rT3 to 3',5'-diiodothyronine (3',5'-T2) and 3,3'-T2 to 3'-monoiodothyronine (3'-T1) via inner-ring deiodination (IRD). Catalyzes the deiodination of 3-T1 to L-thyronine (T0) via outer-ring deiodination (ORD). Catalyzes the tyrosyl ring deiodinations of 3,3',5,5'-tetraiodothyronamine, 3,3',5'-triiodothyronamine, 3,5,3'-triiodothyronamine, 3,5-diiodothyronamine, 3,3'-diiodothyronamine and 3-iodothyronamine. The sequence is that of Thyroxine 5-deiodinase (DIO3) from Bos taurus (Bovine).